Here is a 426-residue protein sequence, read N- to C-terminus: Putative phosphate permease CT_962 (426 aa).

Helical transmembrane passes span 1 to 21, 37 to 57, 83 to 103, 104 to 124, 140 to 160, 183 to 203, 207 to 227, 260 to 280, 309 to 329, 365 to 385, and 399 to 419; these read MWLLLVCVVVGGFYTAWNIGA, LTLKQAVLIAAVFEFLGAVLL, VFGMTAALLATGVWLQIASFC, GWPVSTTHAIVGAVLGFGIIL, VSWLASPIIGGYFAFLIFSFI, AIIIFALGLVLILSGAVAPVI, PALRIVCGLSLFAFFFTIWGI, LIVERIFAYLQMIIACFMSFA, VLLVFMSLGGLGLVCGLATWG, LGFPISTTHVVVGSVLGIGFA, and IVLSWFITVPAGAALSIVFFL.

Belongs to the inorganic phosphate transporter (PiT) (TC 2.A.20) family.

It localises to the cell membrane. Functionally, potential transporter for phosphate. This is Putative phosphate permease CT_962 from Chlamydia trachomatis serovar D (strain ATCC VR-885 / DSM 19411 / UW-3/Cx).